A 135-amino-acid polypeptide reads, in one-letter code: ATP synthase epsilon chain (135 aa).

Belongs to the ATPase epsilon chain family. F-type ATPases have 2 components, CF(1) - the catalytic core - and CF(0) - the membrane proton channel. CF(1) has five subunits: alpha(3), beta(3), gamma(1), delta(1), epsilon(1). CF(0) has three main subunits: a, b and c.

The protein resides in the cell inner membrane. In terms of biological role, produces ATP from ADP in the presence of a proton gradient across the membrane. The chain is ATP synthase epsilon chain from Rhodopseudomonas palustris (strain ATCC BAA-98 / CGA009).